The following is a 206-amino-acid chain: 3-demethoxyubiquinol 3-hydroxylase (206 aa).

Residues Glu-55, Glu-85, His-88, Glu-137, Glu-169, and His-172 each contribute to the Fe cation site.

The protein belongs to the COQ7 family. The cofactor is Fe cation.

It is found in the cell membrane. It catalyses the reaction a 5-methoxy-2-methyl-3-(all-trans-polyprenyl)benzene-1,4-diol + AH2 + O2 = a 3-demethylubiquinol + A + H2O. Its pathway is cofactor biosynthesis; ubiquinone biosynthesis. Functionally, catalyzes the hydroxylation of 2-nonaprenyl-3-methyl-6-methoxy-1,4-benzoquinol during ubiquinone biosynthesis. In Laribacter hongkongensis (strain HLHK9), this protein is 3-demethoxyubiquinol 3-hydroxylase.